Reading from the N-terminus, the 495-residue chain is Anaerobic nitric oxide reductase flavorubredoxin (495 aa).

Residues 30-210 (HKGTSYNSYL…PFSPLVTAKI (181 aa)) are zinc metallo-hydrolase. Positions 79, 81, 83, 147, 166, and 227 each coordinate Fe cation. In terms of domain architecture, Flavodoxin-like spans 254 to 393 (ITLFYDSMSN…ECREHGRQLA (140 aa)). FMN-binding positions include 260-264 (SMSNN) and 342-369 (AFGSYGWTGGAVDRIQTRLMDAGFDISI). Residues 438 to 489 (DQAMLCTVCQWVYDPAQGEPDQLVAPGTPWAQVPDSFLCPGCGIGKEVFEPC) enclose the Rubredoxin-like domain. Fe cation contacts are provided by Cys443, Cys446, Cys476, and Cys479.

The protein in the N-terminal section; belongs to the zinc metallo-hydrolase group 3 family. Homotetramer. Fe cation is required as a cofactor. It depends on FMN as a cofactor.

It localises to the cytoplasm. It functions in the pathway nitrogen metabolism; nitric oxide reduction. In terms of biological role, anaerobic nitric oxide reductase; uses NADH to detoxify nitric oxide (NO), protecting several 4Fe-4S NO-sensitive enzymes. Has at least 2 reductase partners, only one of which (NorW, flavorubredoxin reductase) has been identified. NO probably binds to the di-iron center; electrons enter from the NorW at rubredoxin and are transferred sequentially to the FMN center and the di-iron center. Also able to function as an aerobic oxygen reductase. The chain is Anaerobic nitric oxide reductase flavorubredoxin from Aeromonas hydrophila subsp. hydrophila (strain ATCC 7966 / DSM 30187 / BCRC 13018 / CCUG 14551 / JCM 1027 / KCTC 2358 / NCIMB 9240 / NCTC 8049).